Consider the following 191-residue polypeptide: dTTP/UTP pyrophosphatase (191 aa).

D69 (proton acceptor) is an active-site residue.

The protein belongs to the Maf family. YhdE subfamily. A divalent metal cation serves as cofactor.

Its subcellular location is the cytoplasm. It carries out the reaction dTTP + H2O = dTMP + diphosphate + H(+). The catalysed reaction is UTP + H2O = UMP + diphosphate + H(+). Its function is as follows. Nucleoside triphosphate pyrophosphatase that hydrolyzes dTTP and UTP. May have a dual role in cell division arrest and in preventing the incorporation of modified nucleotides into cellular nucleic acids. The protein is dTTP/UTP pyrophosphatase of Desulforamulus reducens (strain ATCC BAA-1160 / DSM 100696 / MI-1) (Desulfotomaculum reducens).